Here is a 449-residue protein sequence, read N- to C-terminus: Protein CapK (449 aa).

The protein operates within capsule biogenesis; capsule polysaccharide biosynthesis. Its function is as follows. Required for the biosynthesis of type 1 capsular polysaccharide. The polypeptide is Protein CapK (capK) (Staphylococcus aureus).